A 506-amino-acid polypeptide reads, in one-letter code: Anaerobic nitric oxide reductase transcription regulator NorR (506 aa).

D57 carries the 4-aspartylphosphate modification. Residues 187-416 (MIGLSPAMTQ…LEHAIHRAVV (230 aa)) enclose the Sigma-54 factor interaction domain. Residues 215–222 (GETGTGKE) and 278–287 (ADNGTLFLDE) contribute to the ATP site. A DNA-binding region (H-T-H motif) is located at residues 481 to 500 (WAASARALETDVANLHRLAK).

It participates in nitrogen metabolism; nitric oxide reduction. In terms of biological role, required for the expression of anaerobic nitric oxide (NO) reductase, acts as a transcriptional activator for at least the norVW operon. Activation also requires sigma-54. This is Anaerobic nitric oxide reductase transcription regulator NorR from Salmonella paratyphi A (strain ATCC 9150 / SARB42).